The primary structure comprises 155 residues: 6,7-dimethyl-8-ribityllumazine synthase (155 aa).

5-amino-6-(D-ribitylamino)uracil is bound by residues Phe-23, 57-59 (AFE), and 81-83 (AVI). 86–87 (AT) contributes to the (2S)-2-hydroxy-3-oxobutyl phosphate binding site. The active-site Proton donor is the His-89. Phe-114 is a 5-amino-6-(D-ribitylamino)uracil binding site. A (2S)-2-hydroxy-3-oxobutyl phosphate-binding site is contributed by Arg-128.

This sequence belongs to the DMRL synthase family.

The catalysed reaction is (2S)-2-hydroxy-3-oxobutyl phosphate + 5-amino-6-(D-ribitylamino)uracil = 6,7-dimethyl-8-(1-D-ribityl)lumazine + phosphate + 2 H2O + H(+). Its pathway is cofactor biosynthesis; riboflavin biosynthesis; riboflavin from 2-hydroxy-3-oxobutyl phosphate and 5-amino-6-(D-ribitylamino)uracil: step 1/2. Its function is as follows. Catalyzes the formation of 6,7-dimethyl-8-ribityllumazine by condensation of 5-amino-6-(D-ribitylamino)uracil with 3,4-dihydroxy-2-butanone 4-phosphate. This is the penultimate step in the biosynthesis of riboflavin. This chain is 6,7-dimethyl-8-ribityllumazine synthase, found in Geotalea uraniireducens (strain Rf4) (Geobacter uraniireducens).